The following is a 413-amino-acid chain: Methylaspartate ammonia-lyase (413 aa).

Q172 serves as a coordination point for (2S,3S)-3-methyl-L-aspartate. 3 residues coordinate Mg(2+): D238, E273, and D307. Q329 lines the (2S,3S)-3-methyl-L-aspartate pocket. The active-site Proton acceptor is K331. (2S,3S)-3-methyl-L-aspartate contacts are provided by residues 360-361 (TC) and C361.

Belongs to the methylaspartate ammonia-lyase family. As to quaternary structure, homodimer. Mg(2+) is required as a cofactor.

It carries out the reaction (2S,3S)-3-methyl-L-aspartate = mesaconate + NH4(+). Its pathway is amino-acid degradation; L-glutamate degradation via mesaconate pathway; acetate and pyruvate from L-glutamate: step 2/4. Its activity is regulated as follows. Inhibited by calcium ions. Its function is as follows. Involved in the methylaspartate cycle. Catalyzes the formation of the alpha,beta-unsaturated bond by the reversible anti elimination of ammonia from L-threo-beta-methylaspartate (L-threo-(2S,3S)-3-methylaspartate) to give mesaconate. It can also use L-erythro-beta-methylaspartate (L-erythro-(2S,3R)-3-methylaspartate), L-aspartate, fumarate and ethylfumarate as substrates. The chain is Methylaspartate ammonia-lyase from Clostridium tetanomorphum.